Reading from the N-terminus, the 118-residue chain is Large ribosomal subunit protein bL20c (118 aa).

Belongs to the bacterial ribosomal protein bL20 family.

The protein localises to the plastid. It localises to the chloroplast. Binds directly to 23S ribosomal RNA and is necessary for the in vitro assembly process of the 50S ribosomal subunit. It is not involved in the protein synthesizing functions of that subunit. In Adiantum capillus-veneris (Maidenhair fern), this protein is Large ribosomal subunit protein bL20c.